The sequence spans 457 residues: Multidrug resistance protein MdtK (457 aa).

Helical transmembrane passes span 11–31 (LLAL…MGFV), 53–73 (IWLP…PVIA), 93–113 (WLAG…GYII), 127–147 (AVGY…FQVA), 160–180 (GMVM…IFIY), 189–209 (GGVG…LAMV), 243–263 (LPIA…ALLV), 276–296 (IALN…AAVT), 314–334 (AART…IFTV), 350–370 (VVTL…SDSI), 387–407 (IFYI…YILA), and 418–438 (PAGF…MMML).

Belongs to the multi antimicrobial extrusion (MATE) (TC 2.A.66.1) family. MdtK subfamily.

Its subcellular location is the cell inner membrane. In terms of biological role, multidrug efflux pump that functions probably as a Na(+)/drug antiporter. In Escherichia coli (strain SE11), this protein is Multidrug resistance protein MdtK.